A 324-amino-acid polypeptide reads, in one-letter code: Beta-ketoacyl-[acyl-carrier-protein] synthase III (324 aa).

Residues cysteine 112 and histidine 249 contribute to the active site. The segment at 250–254 (QANRR) is ACP-binding. Asparagine 279 is an active-site residue.

This sequence belongs to the thiolase-like superfamily. FabH family. As to quaternary structure, homodimer.

Its subcellular location is the cytoplasm. The catalysed reaction is malonyl-[ACP] + acetyl-CoA + H(+) = 3-oxobutanoyl-[ACP] + CO2 + CoA. It participates in lipid metabolism; fatty acid biosynthesis. In terms of biological role, catalyzes the condensation reaction of fatty acid synthesis by the addition to an acyl acceptor of two carbons from malonyl-ACP. Catalyzes the first condensation reaction which initiates fatty acid synthesis and may therefore play a role in governing the total rate of fatty acid production. Possesses both acetoacetyl-ACP synthase and acetyl transacylase activities. Its substrate specificity determines the biosynthesis of branched-chain and/or straight-chain of fatty acids. This Streptococcus pyogenes serotype M1 protein is Beta-ketoacyl-[acyl-carrier-protein] synthase III.